The sequence spans 473 residues: Homeobox protein ATH1 (473 aa).

The interval 205-221 (SKYLHSVQEILSHFAAY) is SR/KY domain. The tract at residues 266-336 (QRRALEAKKT…NLRERICKKI (71 aa)) is BELL domain. A DNA-binding region (homeobox) is located at residues 372 to 434 (IWRPQRGLPE…NARVRLWKPM (63 aa)). Residues 448–473 (NNSHIQPNGPTLRMPKSVMMSQAMHK) are disordered.

Belongs to the TALE/BELL homeobox family. In terms of assembly, may form heterodimeric complex with the TALE/KNOX protein STM. Most abundant in flowers.

The protein localises to the nucleus. Transcription factor which may be involved in the signal transduction pathway downstream of the COP1 gene. Controls floral competency as a specific activator of FLC expression. Is responsive of the nuclear import of SHOOT MERISTEMLESS (STM). The sequence is that of Homeobox protein ATH1 (ATH1) from Arabidopsis thaliana (Mouse-ear cress).